Consider the following 225-residue polypeptide: NAD(P)H-quinone oxidoreductase subunit K, chloroplastic (225 aa).

[4Fe-4S] cluster contacts are provided by Cys43, Cys44, Cys108, and Cys139.

The protein belongs to the complex I 20 kDa subunit family. As to quaternary structure, NDH is composed of at least 16 different subunits, 5 of which are encoded in the nucleus. The cofactor is [4Fe-4S] cluster.

It is found in the plastid. It localises to the chloroplast thylakoid membrane. It catalyses the reaction a plastoquinone + NADH + (n+1) H(+)(in) = a plastoquinol + NAD(+) + n H(+)(out). The enzyme catalyses a plastoquinone + NADPH + (n+1) H(+)(in) = a plastoquinol + NADP(+) + n H(+)(out). Its function is as follows. NDH shuttles electrons from NAD(P)H:plastoquinone, via FMN and iron-sulfur (Fe-S) centers, to quinones in the photosynthetic chain and possibly in a chloroplast respiratory chain. The immediate electron acceptor for the enzyme in this species is believed to be plastoquinone. Couples the redox reaction to proton translocation, and thus conserves the redox energy in a proton gradient. In Lobularia maritima (Sweet alyssum), this protein is NAD(P)H-quinone oxidoreductase subunit K, chloroplastic.